The primary structure comprises 382 residues: Inactive serine protease 54 (382 aa).

An N-terminal signal peptide occupies residues 1 to 20; the sequence is MAELRGILLLLLYMSHSSSA. The region spanning 29–258 is the Peptidase S1 domain; sequence IVDQLHENLV…YSNWIIAKTR (230 aa). Asn113 carries an N-linked (GlcNAc...) asparagine glycan. Cystine bridges form between Cys154-Cys216, Cys185-Cys195, and Cys206-Cys237.

This sequence belongs to the peptidase S1 family. Plasma kallikrein subfamily.

Its subcellular location is the secreted. The sequence is that of Inactive serine protease 54 (Prss54) from Rattus norvegicus (Rat).